The primary structure comprises 414 residues: Putative transporter AmpG 4 (414 aa).

A run of 12 helical transmembrane segments spans residues 15–35 (IFIL…TLSV), 44–63 (IAVI…KVFW), 84–104 (WLIL…KENP), 109–129 (TSLY…DIAV), 150–170 (VFGY…LAEI), 177–197 (LTFV…ITVN), 230–250 (FAVT…MLGA), 268–288 (IIAK…GGIV), 295–315 (FKGL…FIWL), 324–344 (ALLI…TALV), 360–379 (YALL…IYAG), and 389–409 (GFFI…MYLN).

This sequence belongs to the major facilitator superfamily.

It localises to the cell inner membrane. The sequence is that of Putative transporter AmpG 4 (ampG4) from Rickettsia felis (strain ATCC VR-1525 / URRWXCal2) (Rickettsia azadi).